A 510-amino-acid chain; its full sequence is Ankyrin repeat domain-containing protein 13C-A (510 aa).

Over residues 1 to 19 the composition is skewed to basic and acidic residues; it reads MTGEKIRSLHKDQKPSKDE. Residues 1–35 are disordered; it reads MTGEKIRSLHKDQKPSKDEDLLEPDEEATAGGTFT. ANK repeat units follow at residues 80-111, 112-141, and 145-174; these read DVYF…QKDS, HGNT…PVKV, and QGWS…QQSR.

The protein localises to the endoplasmic reticulum membrane. Its function is as follows. Acts as a molecular chaperone for G protein-coupled receptors, regulating their biogenesis and exit from the ER. The protein is Ankyrin repeat domain-containing protein 13C-A (ankrd13c-a) of Xenopus laevis (African clawed frog).